The primary structure comprises 289 residues: Bidirectional sugar transporter SWEET10 (289 aa).

Over 1 to 5 the chain is Extracellular; sequence MAISQ. Residues 6–26 form a helical membrane-spanning segment; that stretch reads AVLATVFGILGNIISFFVCLA. A MtN3/slv 1 domain is found at 11–96; the sequence is VFGILGNIIS…SLFFFYAPKK (86 aa). Residues 27 to 43 are Cytoplasmic-facing; sequence PIPTFVRIYKRKSSEGY. Residues 44–64 traverse the membrane as a helical segment; that stretch reads QSIPYVISLFSAMLWMYYAMI. The Extracellular segment spans residues 65–70; the sequence is KKDAMM. The chain crosses the membrane as a helical span at residues 71–91; it reads LITINSFAFVVQIVYISLFFF. Residues 92-103 are Cytoplasmic-facing; that stretch reads YAPKKEKTLTVK. The chain crosses the membrane as a helical span at residues 104–124; sequence FVLFVDVLGFGAIFVLTYFII. Residues 125-131 are Extracellular-facing; the sequence is HANKRVQ. The region spanning 131–214 is the MtN3/slv 2 domain; sequence QVLGYICMVF…QMILFLIYKK (84 aa). A helical transmembrane segment spans residues 132 to 152; sequence VLGYICMVFALSVFVAPLGII. Residues 153–165 are Cytoplasmic-facing; the sequence is RKVIKTKSAEFMP. The chain crosses the membrane as a helical span at residues 166–186; that stretch reads FGLSFFLTLSAVMWFFYGLLL. At 187-190 the chain is on the extracellular side; sequence KDMN. A helical transmembrane segment spans residues 191–211; it reads IALPNVLGFIFGVLQMILFLI. Over 212–289 the chain is Cytoplasmic; it reads YKKPGTKVLE…EKEVFLISKN (78 aa).

Belongs to the SWEET sugar transporter family. As to quaternary structure, forms heterooligomers with SWEET8.

It localises to the cell membrane. Its function is as follows. Mediates both low-affinity uptake and efflux of sugar across the plasma membrane. The sequence is that of Bidirectional sugar transporter SWEET10 from Arabidopsis thaliana (Mouse-ear cress).